Reading from the N-terminus, the 557-residue chain is Dihydroxy-acid dehydratase (557 aa).

Aspartate 78 provides a ligand contact to Mg(2+). Residue cysteine 119 participates in [2Fe-2S] cluster binding. The Mg(2+) site is built by aspartate 120 and lysine 121. N6-carboxylysine is present on lysine 121. A [2Fe-2S] cluster-binding site is contributed by cysteine 192. Position 442 (glutamate 442) interacts with Mg(2+). Serine 468 (proton acceptor) is an active-site residue.

The protein belongs to the IlvD/Edd family. As to quaternary structure, homodimer. Requires [2Fe-2S] cluster as cofactor. Mg(2+) is required as a cofactor.

The enzyme catalyses (2R)-2,3-dihydroxy-3-methylbutanoate = 3-methyl-2-oxobutanoate + H2O. It catalyses the reaction (2R,3R)-2,3-dihydroxy-3-methylpentanoate = (S)-3-methyl-2-oxopentanoate + H2O. The protein operates within amino-acid biosynthesis; L-isoleucine biosynthesis; L-isoleucine from 2-oxobutanoate: step 3/4. It participates in amino-acid biosynthesis; L-valine biosynthesis; L-valine from pyruvate: step 3/4. In terms of biological role, functions in the biosynthesis of branched-chain amino acids. Catalyzes the dehydration of (2R,3R)-2,3-dihydroxy-3-methylpentanoate (2,3-dihydroxy-3-methylvalerate) into 2-oxo-3-methylpentanoate (2-oxo-3-methylvalerate) and of (2R)-2,3-dihydroxy-3-methylbutanoate (2,3-dihydroxyisovalerate) into 2-oxo-3-methylbutanoate (2-oxoisovalerate), the penultimate precursor to L-isoleucine and L-valine, respectively. The protein is Dihydroxy-acid dehydratase of Bacillus anthracis (strain A0248).